Reading from the N-terminus, the 60-residue chain is Large ribosomal subunit protein uL30 (60 aa).

It belongs to the universal ribosomal protein uL30 family. In terms of assembly, part of the 50S ribosomal subunit.

The chain is Large ribosomal subunit protein uL30 from Cutibacterium acnes (strain DSM 16379 / KPA171202) (Propionibacterium acnes).